The sequence spans 334 residues: Aspartate carbamoyltransferase catalytic subunit (334 aa).

The carbamoyl phosphate site is built by Arg-71 and Thr-72. An L-aspartate-binding site is contributed by Lys-99. Residues Arg-121, His-151, and Gln-154 each contribute to the carbamoyl phosphate site. L-aspartate contacts are provided by Arg-184 and Arg-239. Residues Gly-280 and Pro-281 each contribute to the carbamoyl phosphate site.

Belongs to the aspartate/ornithine carbamoyltransferase superfamily. ATCase family. As to quaternary structure, heterododecamer (2C3:3R2) of six catalytic PyrB chains organized as two trimers (C3), and six regulatory PyrI chains organized as three dimers (R2).

The catalysed reaction is carbamoyl phosphate + L-aspartate = N-carbamoyl-L-aspartate + phosphate + H(+). Its pathway is pyrimidine metabolism; UMP biosynthesis via de novo pathway; (S)-dihydroorotate from bicarbonate: step 2/3. Its function is as follows. Catalyzes the condensation of carbamoyl phosphate and aspartate to form carbamoyl aspartate and inorganic phosphate, the committed step in the de novo pyrimidine nucleotide biosynthesis pathway. The polypeptide is Aspartate carbamoyltransferase catalytic subunit (Pseudomonas savastanoi pv. phaseolicola (strain 1448A / Race 6) (Pseudomonas syringae pv. phaseolicola (strain 1448A / Race 6))).